Consider the following 188-residue polypeptide: Killer cell lectin-like receptor subfamily G member 1 (188 aa).

The Cytoplasmic portion of the chain corresponds to methionine 1–proline 33. Residues serine 5 to leucine 10 carry the ITIM motif motif. A helical; Signal-anchor for type II membrane protein membrane pass occupies residues histidine 34–tyrosine 56. Residues glutamine 57–tyrosine 188 are Extracellular-facing. A disulfide bridge connects residues cysteine 75 and cysteine 86. Asparagine 82 and asparagine 97 each carry an N-linked (GlcNAc...) asparagine glycan. In terms of domain architecture, C-type lectin spans asparagine 82 to lysine 184. 2 cysteine pairs are disulfide-bonded: cysteine 103-cysteine 183 and cysteine 162-cysteine 175.

Forms a monomer and homodimer; disulfide-linked. Interacts (via ITIM motif) with PTPN11 and INPP5D. In terms of processing, phosphorylated in response to monoclonal antibody G63 binding and antigenic stimulation. Expressed specifically on natural killer (NK) cells and activated CD8 T-cells. Not detected in spleen, thymus, lymph node, testis, brain or kidney. Not detected on mast cell lines, bone marrow-derived mast cells, or peritoneal mast cells.

The protein resides in the cell membrane. Plays an inhibitory role on natural killer (NK) cells and T-cell functions upon binding to their non-MHC ligands. May mediate missing self recognition by binding to a highly conserved site on classical cadherins, enabling it to monitor expression of E-cadherin/CDH1, N-cadherin/CDH2 and R-cadherin/CDH4 on target cells. In Mus musculus (Mouse), this protein is Killer cell lectin-like receptor subfamily G member 1 (Klrg1).